Here is a 406-residue protein sequence, read N- to C-terminus: MSLIRVNGEAFKLSLESLEEDPFENKETLETLVKQTSVVLLAAGESRRFSQTIKKQWLRSNHTPLWLSVYESFKEALNFKEILLVVSELDYIYIKRHHPEIKLVRGGASRQESVRNALKIIDSAYTLTSDVARGLANIEALKSLFLTLQQTSHYCIAPYLPCYDTAIYYNEVLDREAIKLIQTPQLSHTKTLQSALNQGDFKDESSAILQAFPDLVSYIEGSKDLHKLTTSDDLKHFALFFNPAKDTFIGMGFDTHAFIKDKPMVLGGVVLDCEFGLKAHSDGDALLHAVIDAILGAIKGGDIGEWFPDNDPQYKNASSKELLKIVLDFSQSIGFELLEMGATIFSEIPKITPYKPTILENLSQLLGLEKSQISLKATTMEKMGFIGKQEGLLVQAHVSMRYKQKL.

Residues 1–247 (MSLIRVNGEA…ALFFNPAKDT (247 aa)) are 2-C-methyl-D-erythritol 4-phosphate cytidylyltransferase. The tract at residues 248 to 406 (FIGMGFDTHA…HVSMRYKQKL (159 aa)) is 2-C-methyl-D-erythritol 2,4-cyclodiphosphate synthase. A divalent metal cation-binding residues include aspartate 254 and histidine 256. 4-CDP-2-C-methyl-D-erythritol 2-phosphate contacts are provided by residues 254–256 (DTH) and 280–281 (HS). Histidine 288 serves as a coordination point for a divalent metal cation. Residues 302-304 (DIG), 307-311 (FPDND), 378-381 (TTME), phenylalanine 385, and lysine 388 each bind 4-CDP-2-C-methyl-D-erythritol 2-phosphate.

This sequence in the N-terminal section; belongs to the IspD/TarI cytidylyltransferase family. IspD subfamily. The protein in the C-terminal section; belongs to the IspF family. Requires a divalent metal cation as cofactor.

It carries out the reaction 2-C-methyl-D-erythritol 4-phosphate + CTP + H(+) = 4-CDP-2-C-methyl-D-erythritol + diphosphate. The enzyme catalyses 4-CDP-2-C-methyl-D-erythritol 2-phosphate = 2-C-methyl-D-erythritol 2,4-cyclic diphosphate + CMP. The protein operates within isoprenoid biosynthesis; isopentenyl diphosphate biosynthesis via DXP pathway; isopentenyl diphosphate from 1-deoxy-D-xylulose 5-phosphate: step 2/6. It participates in isoprenoid biosynthesis; isopentenyl diphosphate biosynthesis via DXP pathway; isopentenyl diphosphate from 1-deoxy-D-xylulose 5-phosphate: step 4/6. Bifunctional enzyme that catalyzes the formation of 4-diphosphocytidyl-2-C-methyl-D-erythritol from CTP and 2-C-methyl-D-erythritol 4-phosphate (MEP) (IspD), and catalyzes the conversion of 4-diphosphocytidyl-2-C-methyl-D-erythritol 2-phosphate (CDP-ME2P) to 2-C-methyl-D-erythritol 2,4-cyclodiphosphate (ME-CPP) with a corresponding release of cytidine 5-monophosphate (CMP) (IspF). This Helicobacter pylori (strain Shi470) protein is Bifunctional enzyme IspD/IspF.